The following is a 334-amino-acid chain: Replication factor C small subunit (334 aa).

Residue 49–56 coordinates ATP; it reads GPPGVGKT.

It belongs to the activator 1 small subunits family. RfcS subfamily. In terms of assembly, heteromultimer composed of small subunits (RfcS) and large subunits (RfcL).

Its function is as follows. Part of the RFC clamp loader complex which loads the PCNA sliding clamp onto DNA. This is Replication factor C small subunit from Methanosarcina barkeri (strain Fusaro / DSM 804).